The sequence spans 239 residues: MQSRLAWSKGNWTGLVGSLISLTSSSTSHALVGNNSILICGKIKIILNIEMVDTGRIFVITGPSGVGKSSLVRCLIDHFKDKLRYSISATTRKMRNSETEGVDYFFKDKAEFEKLIAADAFVEWAMYNDNYYGTLKSQAEQIIHNGGNLVLEIEYQGALQVKQKYPNDVVLIFIKPPSMEELLVRLKKRNDEDAITIQNRLKQAEKECQQIGHFKYVVTNNEFDKTLAELQAILLAEFN.

The Guanylate kinase-like domain maps to 55–235 (GRIFVITGPS…TLAELQAILL (181 aa)). 62–69 (GPSGVGKS) contributes to the ATP binding site.

Belongs to the guanylate kinase family.

It localises to the cytoplasm. The catalysed reaction is GMP + ATP = GDP + ADP. In terms of biological role, essential for recycling GMP and indirectly, cGMP. The chain is Guanylate kinase (gmk) from Mycoplasma pneumoniae (strain ATCC 29342 / M129 / Subtype 1) (Mycoplasmoides pneumoniae).